The following is a 145-amino-acid chain: Putative pre-16S rRNA nuclease (145 aa).

Belongs to the YqgF nuclease family.

It is found in the cytoplasm. In terms of biological role, could be a nuclease involved in processing of the 5'-end of pre-16S rRNA. This Pseudomonas fluorescens (strain SBW25) protein is Putative pre-16S rRNA nuclease.